We begin with the raw amino-acid sequence, 1742 residues long: NACHT and WD repeat domain-containing protein 2 (1742 aa).

5 LRR repeats span residues 386–410, 677–698, 724–747, 883–906, and 925–953; these read FYEY…GHIN, LEDV…TRPS, VKNV…LYLQ, YSQE…VIAF, and LPKL…SSMD. The NACHT domain maps to 410 to 737; the sequence is NPLVVYGGPC…TLLVWANRHL (328 aa). 11 WD repeats span residues 963 to 1004, 1007 to 1046, 1140 to 1179, 1229 to 1271, 1272 to 1311, 1314 to 1353, 1355 to 1394, 1396 to 1434, 1476 to 1516, 1522 to 1561, and 1614 to 1653; these read LASS…LLRQ, TAQS…LLSE, FSGG…NPQL, RHNE…ASLQ, ESSG…AMSN, KTGK…IEAV, KHEG…NLFR, NGQR…RVCN, EDGI…ICRR, NFLK…LRVV, and SLYK…DAAL. The interval 1702 to 1721 is disordered; that stretch reads PITVSDSSESNEATPSKKHN. A compositionally biased stretch (polar residues) spans 1703 to 1715; that stretch reads ITVSDSSESNEAT.

This Mus musculus (Mouse) protein is NACHT and WD repeat domain-containing protein 2 (Nwd2).